The primary structure comprises 320 residues: Zinc finger protein 330 (320 aa).

The segment at 1-23 (MPKKKTGARKKAENRREREKQLR) is disordered. Residues 3-11 (KKKTGARKK) carry the Nuclear localization signal motif. Over residues 10-22 (KKAENRREREKQL) the composition is skewed to basic and acidic residues. C4-type zinc fingers lie at residues 42-58 (CDKCQRRQKNRAFCYFC), 67-104 (CAQCGKTKCMMKSSDCVIKHAGVYSTGLAMVGAICDFC), 129-149 (CVECERGVWDHGGRIFSCSFC), and 175-189 (CVSCNRLGQHSCLRC). Disordered stretches follow at residues 206-250 (EKGK…ASGY) and 264-303 (GASYHDEEEDEYEAEDDEEEEDEGGKDSDAESSDLFTNLN). A compositionally biased stretch (basic and acidic residues) spans 216 to 225 (CGHETQETKD). Acidic residues predominate over residues 269 to 287 (DEEEDEYEAEDDEEEEDEG). Position 291 is a phosphoserine (Ser291).

It belongs to the NOA36 family.

Its subcellular location is the nucleus. It is found in the nucleolus. It localises to the chromosome. The protein localises to the centromere. The protein is Zinc finger protein 330 (ZNF330) of Bos taurus (Bovine).